A 163-amino-acid chain; its full sequence is Peptide methionine sulfoxide reductase MsrA (163 aa).

Cysteine 10 is an active-site residue.

This sequence belongs to the MsrA Met sulfoxide reductase family.

It catalyses the reaction L-methionyl-[protein] + [thioredoxin]-disulfide + H2O = L-methionyl-(S)-S-oxide-[protein] + [thioredoxin]-dithiol. It carries out the reaction [thioredoxin]-disulfide + L-methionine + H2O = L-methionine (S)-S-oxide + [thioredoxin]-dithiol. In terms of biological role, has an important function as a repair enzyme for proteins that have been inactivated by oxidation. Catalyzes the reversible oxidation-reduction of methionine sulfoxide in proteins to methionine. In Ruthia magnifica subsp. Calyptogena magnifica, this protein is Peptide methionine sulfoxide reductase MsrA.